The primary structure comprises 258 residues: MMFKNFPFFKGKKDTSFDHLVEEVKKGYIPEHIAIIMDGNGRWAKRRAMPRIAGHHEGMQVVKKITKFASKLNVKVLTLYAFSTENWKRPKKEVDYLMKLPEEFLGTFLPELIEENVQVRVIGQQDRLPTHTRRAMEKAMEETKENTGLILNFALNYGSRDEIVSAVQHMMKDSEEGKVRVEDVSEEMLSSYLMTSSLPDPELLIRTSGELRISNFMLWQIAYSEFWFTDVYWPDFTEEHLLNAITDFQHRGRRFGGV.

Asp-38 is an active-site residue. Position 38 (Asp-38) interacts with Mg(2+). Substrate-binding positions include 39–42, Trp-43, Arg-51, His-55, and 83–85; these read GNGR and STE. The active-site Proton acceptor is Asn-86. Residues Trp-87, Arg-89, Arg-206, and 212-214 each bind substrate; that span reads RIS. Glu-225 is a Mg(2+) binding site.

It belongs to the UPP synthase family. Homodimer. It depends on Mg(2+) as a cofactor.

Its function is as follows. Catalyzes the condensation of isopentenyl diphosphate (IPP) with allylic pyrophosphates generating different type of terpenoids. The polypeptide is Isoprenyl transferase (Bacillus thuringiensis subsp. konkukian (strain 97-27)).